The following is a 438-amino-acid chain: (S)-3,5-dihydroxyphenylglycine transaminase (438 aa).

K266 carries the post-translational modification N6-(pyridoxal phosphate)lysine.

It belongs to the class-I pyridoxal-phosphate-dependent aminotransferase family. The cofactor is pyridoxal 5'-phosphate.

It carries out the reaction (S)-3,5-dihydroxyphenylglycine + 2-oxoglutarate = 2-(3,5-dihydroxyphenyl)-2-oxoacetate + L-glutamate. It functions in the pathway antibiotic biosynthesis; vancomycin biosynthesis. Functionally, catalyzes the transamination of p-hydroxybenzoylformate to L-p-hydroxyphenylglycine as part of the biosynthesis of the (S)-3,5-dihydroxyphenylglycine constituent of the glycopeptide antibiotic chloroeremomycin, a member of the vancomycin group of antibiotics. This is (S)-3,5-dihydroxyphenylglycine transaminase (hpgT) from Amycolatopsis orientalis (Nocardia orientalis).